Here is a 213-residue protein sequence, read N- to C-terminus: ATP phosphoribosyltransferase (213 aa).

It belongs to the ATP phosphoribosyltransferase family. Short subfamily. As to quaternary structure, heteromultimer composed of HisG and HisZ subunits.

It is found in the cytoplasm. The enzyme catalyses 1-(5-phospho-beta-D-ribosyl)-ATP + diphosphate = 5-phospho-alpha-D-ribose 1-diphosphate + ATP. The protein operates within amino-acid biosynthesis; L-histidine biosynthesis; L-histidine from 5-phospho-alpha-D-ribose 1-diphosphate: step 1/9. Catalyzes the condensation of ATP and 5-phosphoribose 1-diphosphate to form N'-(5'-phosphoribosyl)-ATP (PR-ATP). Has a crucial role in the pathway because the rate of histidine biosynthesis seems to be controlled primarily by regulation of HisG enzymatic activity. The protein is ATP phosphoribosyltransferase of Saccharophagus degradans (strain 2-40 / ATCC 43961 / DSM 17024).